A 151-amino-acid chain; its full sequence is Succinate dehydrogenase subunit 4, mitochondrial (151 aa).

The N-terminal 78 residues, 1–78, are a transit peptide targeting the mitochondrion; sequence MSLRRTILDL…RSISSSIGQS (78 aa). Residue His-109 coordinates heme. Tyr-121 contacts a ubiquinone. The helical transmembrane segment at 130–150 threads the bilayer; the sequence is LIVMSLGLFQIIVLKDIILFL.

Component of complex II composed of eight subunits in plants: four classical SDH subunits SDH1, SDH2, SDH3 and SDH4 (a flavoprotein (FP), an iron-sulfur protein (IP), and a cytochrome b composed of a large and a small subunit.), as well as four subunits unknown in mitochondria from bacteria and heterotrophic eukaryotes. It depends on heme as a cofactor. As to expression, expressed in flowers, inflorescences and stems.

It is found in the mitochondrion inner membrane. Its pathway is carbohydrate metabolism; tricarboxylic acid cycle. Its function is as follows. Membrane-anchoring subunit of succinate dehydrogenase (SDH). This is Succinate dehydrogenase subunit 4, mitochondrial from Arabidopsis thaliana (Mouse-ear cress).